The following is a 485-amino-acid chain: MATTNAQIYQQSQMPIPMPTPSLNPNINSAPTPGPNAMSVYEDCQSPLDTSVSGMYPGDRGSRVVSQPAPLLDQSHLRPGNQANLLSHDRTIELYRENAKKTNDPELIFEFSAFMIDAAKAMIPPEQEKDTNPSPALIKQMEKREEIIKEATSLLKRLADRGFPDAQYFLADCYANGIGTARGKQDFDRAFPLFILAAKHGHPDACYRAGTCCEHGWGCRRDSAKAVSFYKKAAVGLHPGAMYRLGTAELNGALGFPRRPKEGVKWLKRSAEHATEEFPHALHELALLHERGIENVVFVDNDYAAELLAQSAELGYAPSAFKLGECYEYGKMGCPVDPALSIHYYNISAQQDHKDACFALTAWYLVGSPGVLPQSDTEAYLWAKKAAELGLAKAQYAVGYFTETGIGIEANPQAALTWYKQAAEGGDKRAAKRLATGSRSSALDRRLEMEALKEEKRLGAANLAQRSGSGSGASGKDGKDGCLIM.

Sel1-like repeat units follow at residues 164-202, 203-238, 239-275, 279-316, 317-353, 354-391, and 392-427; these read PDAQ…KHGH, PDAC…VGLH, PGAM…EHAT, PHAL…ELGY, APSA…QQDH, KDAC…ELGL, and AKAQ…EGGD. The disordered stretch occupies residues 460–485; sequence AANLAQRSGSGSGASGKDGKDGCLIM. The span at 476 to 485 shows a compositional bias: basic and acidic residues; that stretch reads KDGKDGCLIM. A Cysteine methyl ester modification is found at Cys-482. The S-farnesyl cysteine moiety is linked to residue Cys-482. A propeptide spans 483 to 485 (removed in mature form); the sequence is LIM.

Belongs to the SKT5 family.

It is found in the cell membrane. In terms of biological role, activator of the chitin synthase CHS3 which polymerizes chitin, a structural polymer of the fungal cell wall. Chitin produced by CHS3 is deacetylated to chitosan, which helps to maintain cell wall integrity, anchor melanin, and offers an advantage during infection, as chitosan is less readily detected by host immunosurveillance. This is Chitin synthase regulator 2 from Cryptococcus neoformans var. grubii serotype A (strain H99 / ATCC 208821 / CBS 10515 / FGSC 9487) (Filobasidiella neoformans var. grubii).